Consider the following 643-residue polypeptide: Threonine--tRNA ligase (643 aa).

The region spanning Met-1 to Thr-61 is the TGS domain. The segment at Asp-243–Pro-534 is catalytic. Zn(2+) is bound by residues Cys-334, His-385, and His-511.

The protein belongs to the class-II aminoacyl-tRNA synthetase family. As to quaternary structure, homodimer. Zn(2+) serves as cofactor.

It is found in the cytoplasm. It catalyses the reaction tRNA(Thr) + L-threonine + ATP = L-threonyl-tRNA(Thr) + AMP + diphosphate + H(+). Catalyzes the attachment of threonine to tRNA(Thr) in a two-step reaction: L-threonine is first activated by ATP to form Thr-AMP and then transferred to the acceptor end of tRNA(Thr). Also edits incorrectly charged L-seryl-tRNA(Thr). The protein is Threonine--tRNA ligase of Haemophilus influenzae (strain ATCC 51907 / DSM 11121 / KW20 / Rd).